A 357-amino-acid polypeptide reads, in one-letter code: Peptide chain release factor 1 (357 aa).

Q235 carries the N5-methylglutamine modification. The disordered stretch occupies residues 285–305 (KRHNEASAMRSAQVGSGDRSE).

This sequence belongs to the prokaryotic/mitochondrial release factor family. In terms of processing, methylated by PrmC. Methylation increases the termination efficiency of RF1.

It is found in the cytoplasm. Functionally, peptide chain release factor 1 directs the termination of translation in response to the peptide chain termination codons UAG and UAA. The protein is Peptide chain release factor 1 (prfA) of Chlamydia pneumoniae (Chlamydophila pneumoniae).